Reading from the N-terminus, the 440-residue chain is Cytochrome b (440 aa).

The chain crosses the membrane as a helical span at residues 46–66 (IWGIVLAFCLVLQIATGIVLV). Residues His-97 and His-111 each coordinate heme b. Helical transmembrane passes span 100–120 (GASLFFLAVYIHIFRGLYYGS), 129–149 (WIVGMLIYLMMMGTAFMGYVL), 156–176 (FWGATVITGLFGAIPGVGEAI), 194–214 (FFSLHYLLPFVIAALVVVHIW), 253–273 (LFALAVVLVVFFAIVGFMPNY), 296–315 (WYFLPFYAILRAFTADVWVV), 330–350 (FFGVIAMFGAILVMALVPWLD), 365–385 (WWFWLLAVDFVVLMWVGAMPA), and 394–414 (LAGSAYWFAYFLIILPLLGII). 2 residues coordinate heme b: His-198 and His-212.

This sequence belongs to the cytochrome b family. As to quaternary structure, the main subunits of complex b-c1 are: cytochrome b, cytochrome c1 and the Rieske protein. Heme b serves as cofactor.

It is found in the cell membrane. Its function is as follows. Component of the ubiquinol-cytochrome c reductase complex (complex III or cytochrome b-c1 complex), which is a respiratory chain that generates an electrochemical potential coupled to ATP synthesis. This is Cytochrome b (petB) from Paracoccus denitrificans.